The primary structure comprises 231 residues: MSIPLLNYSLSTQNQRVDGYEVSPGEEQPRAYNTDNLPSAVEMDEVIWAAYRQIFSEHQILSSTSAPYLESQLRFNQIKVKDFIKGLILSESFRKLNYDVNNNYRFVEICVQRILGRDVYNEREKLAWSIVIASKGLESFINMLIESDEYEENFGDSIVPYQRRRIIAQRSKGEMPFNLKTPRYGADFKEKFGMPQFIWQGPVRQFRPQEQRPKAGDPALFLGMVNDLATV.

Residues 11–191 enclose the PBS-linker domain; that stretch reads STQNQRVDGY…PRYGADFKEK (181 aa).

This sequence belongs to the phycobilisome linker protein family. The phycobilisome is a hemidiscoidal structure that is composed of two distinct substructures: a core complex and a number of rods radiating from the core.

Its subcellular location is the plastid. The protein localises to the chloroplast. The protein resides in the chloroplast thylakoid membrane. Rod-core linker protein required for attachment of phycocyanin to allophycocyanin in cores of phycobilisomes. Its function is as follows. Linker polypeptides determine the state of aggregation and the location of the disk-shaped phycobiliprotein units within the phycobilisome and modulate their spectroscopic properties in order to mediate a directed and optimal energy transfer. The sequence is that of Phycobilisome rod-core linker polypeptide cpcG (cpcG) from Porphyra purpurea (Red seaweed).